Consider the following 487-residue polypeptide: 3-octaprenyl-4-hydroxybenzoate carboxy-lyase (487 aa).

A Mn(2+)-binding site is contributed by asparagine 172. Residues 175 to 177 (IYR), 189 to 191 (RWL), and 194 to 195 (RG) contribute to the prenylated FMN site. Glutamate 238 is a Mn(2+) binding site. The active-site Proton donor is aspartate 287.

The protein belongs to the UbiD family. As to quaternary structure, homohexamer. It depends on prenylated FMN as a cofactor. Mn(2+) is required as a cofactor.

The protein localises to the cell membrane. It carries out the reaction a 4-hydroxy-3-(all-trans-polyprenyl)benzoate + H(+) = a 2-(all-trans-polyprenyl)phenol + CO2. Its pathway is cofactor biosynthesis; ubiquinone biosynthesis. Functionally, catalyzes the decarboxylation of 3-octaprenyl-4-hydroxy benzoate to 2-octaprenylphenol, an intermediate step in ubiquinone biosynthesis. The chain is 3-octaprenyl-4-hydroxybenzoate carboxy-lyase from Actinobacillus pleuropneumoniae serotype 7 (strain AP76).